The following is a 778-amino-acid chain: uncharacterized protein (778 aa).

3 stretches are compositionally biased toward polar residues: residues 1–11, 18–34, and 41–51; these read MPISSPGTRCS, TLQQ…QSLG, and GSITENYVQDS. The disordered stretch occupies residues 1–60; the sequence is MPISSPGTRCSSDLKDPTLQQYSAESVSTEQSLGTFEESKGSITENYVQDSSVDEHDDGN. Helical transmembrane passes span 356–381 and 401–423; these read YILM…APII and GFLA…GAHI.

The protein belongs to the TMCO4 family.

Its subcellular location is the golgi apparatus membrane. This is an uncharacterized protein from Schizosaccharomyces pombe (strain 972 / ATCC 24843) (Fission yeast).